Here is a 312-residue protein sequence, read N- to C-terminus: Pantothenate kinase (312 aa).

97-104 contributes to the ATP binding site; it reads GSVAVGKS.

This sequence belongs to the prokaryotic pantothenate kinase family.

The protein localises to the cytoplasm. The catalysed reaction is (R)-pantothenate + ATP = (R)-4'-phosphopantothenate + ADP + H(+). The protein operates within cofactor biosynthesis; coenzyme A biosynthesis; CoA from (R)-pantothenate: step 1/5. The polypeptide is Pantothenate kinase (coaA) (Mycobacterium leprae (strain TN)).